Here is a 122-residue protein sequence, read N- to C-terminus: NADH-ubiquinone oxidoreductase chain 3 (122 aa).

Transmembrane regions (helical) follow at residues 12-32 (VLIFFIFSFGLSCIILGLSYV), 66-86 (LVAILFIIFDLEVAFLFPWAV), and 91-111 (VTIFGFWTMFIFLLILTVGFI).

It belongs to the complex I subunit 3 family.

Its subcellular location is the mitochondrion membrane. It carries out the reaction a ubiquinone + NADH + 5 H(+)(in) = a ubiquinol + NAD(+) + 4 H(+)(out). In terms of biological role, core subunit of the mitochondrial membrane respiratory chain NADH dehydrogenase (Complex I) that is believed to belong to the minimal assembly required for catalysis. Complex I functions in the transfer of electrons from NADH to the respiratory chain. The immediate electron acceptor for the enzyme is believed to be ubiquinone. In Reclinomonas americana, this protein is NADH-ubiquinone oxidoreductase chain 3 (NAD3).